The following is a 365-amino-acid chain: Phosphatidylcholine:ceramide cholinephosphotransferase 2 (365 aa).

The interval 9 to 50 (LEGHLESQTNNSTNTYTSPTEAVEEEDKNGKGKPKTLSNGLR) is disordered. Over residues 15 to 28 (SQTNNSTNTYTSPT) the composition is skewed to low complexity. Helical transmembrane passes span 80–100 (GIAFVYALFNLILTTVMITVV), 128–148 (FSVSEINGMVLVGLWLTQWLF), 159–179 (FFFIMGTLYLYRCITMYVTTL), 219–239 (ILCGDFLFSGHTVVLTLTYLF), and 248–268 (FWWYHLVCWLLSAAGIICILV). H229 is a catalytic residue. Catalysis depends on residues H272 and D276. A helical membrane pass occupies residues 273 to 290 (YTVDVIIAYYITTRLFWW). Residues 291–365 (YHSMANEKNL…KIGEDNEKST (75 aa)) lie on the Cytoplasmic side of the membrane. S-palmitoyl cysteine attachment occurs at residues C331, C332, C343, and C348.

Belongs to the sphingomyelin synthase family. In terms of processing, palmitoylated on Cys-331, Cys-332, Cys-343 and Cys-348; which plays an important role in plasma membrane localization. In terms of tissue distribution, expression restricted to late round spermatids and elongating spermatids but not detected in late elongate spermatids and Sertoli cells (at protein level).

The protein resides in the cell membrane. It localises to the golgi apparatus membrane. The catalysed reaction is an N-acylsphing-4-enine + a 1,2-diacyl-sn-glycero-3-phosphocholine = a sphingomyelin + a 1,2-diacyl-sn-glycerol. The enzyme catalyses an N-acylsphinganine + a 1,2-diacyl-sn-glycero-3-phosphocholine = an N-acylsphinganine-1-phosphocholine + a 1,2-diacyl-sn-glycerol. It carries out the reaction an N-acyl-(4R)-4-hydroxysphinganine + a 1,2-diacyl-sn-glycero-3-phosphocholine = an N-acyl-(4R)-4-hydroxysphinganine-phosphocholine + a 1,2-diacyl-sn-glycerol. It catalyses the reaction an N-acylsphing-4-enine + a 1,2-diacyl-sn-glycero-3-phosphoethanolamine = an N-acylsphing-4-enine 1-phosphoethanolamine + a 1,2-diacyl-sn-glycerol. The catalysed reaction is an N-acylsphinganine + a 1,2-diacyl-sn-glycero-3-phosphoethanolamine = an N-acylsphinganine-1-phosphoethanolamine + a 1,2-diacyl-sn-glycerol. The enzyme catalyses an N-acyl-(4R)-4-hydroxysphinganine + a 1,2-diacyl-sn-glycero-3-phosphoethanolamine = an N-acyl-(4R)-4-hydroxysphinganine-1-phosphoethanolamine + a 1,2-diacyl-sn-glycerol. It carries out the reaction 1,2-dihexadecanoyl-sn-glycero-3-phosphocholine + an N-acylsphing-4-enine = 1,2-dihexadecanoyl-sn-glycerol + a sphingomyelin. It catalyses the reaction 1-(9Z-octadecenoyl)-2-acyl-sn-3-glycerol + a sphingomyelin = a 1-(9Z-octadecenoyl)-2-acyl-sn-glycero-3-phosphocholine + an N-acylsphing-4-enine. The catalysed reaction is N-hexadecanoylsphinganine + a 1,2-diacyl-sn-glycero-3-phosphocholine = N-hexadecanoyl-sphinganine-1-phosphocholine + a 1,2-diacyl-sn-glycerol. The enzyme catalyses N-hexadecanoyl-(4R)-hydroxysphinganine + a 1,2-diacyl-sn-glycero-3-phosphocholine = N-hexadecanoyl-(4R)-hydroxysphinganine-phosphocholine + a 1,2-diacyl-sn-glycerol. It carries out the reaction N-hexadecanoylsphinganine + a 1,2-diacyl-sn-glycero-3-phosphoethanolamine = N-hexadecanoyl-sphinganine-1-phosphoethanolamine + a 1,2-diacyl-sn-glycerol. It catalyses the reaction N-hexadecanoyl-(4R)-hydroxysphinganine + a 1,2-diacyl-sn-glycero-3-phosphoethanolamine = N-hexadecanoyl-(4R)-hydroxysphinganine-1-phosphoethanolamine + a 1,2-diacyl-sn-glycerol. It functions in the pathway sphingolipid metabolism. Functionally, sphingomyelin synthase that primarily contributes to sphingomyelin synthesis and homeostasis at the plasma membrane. Catalyzes the reversible transfer of phosphocholine moiety in sphingomyelin biosynthesis: in the forward reaction transfers phosphocholine head group of phosphatidylcholine (PC) on to ceramide (CER) to form ceramide phosphocholine (sphingomyelin, SM) and diacylglycerol (DAG) as by-product, and in the reverse reaction transfers phosphocholine from SM to DAG to form PC and CER. The direction of the reaction appears to depend on the levels of CER and DAG in the plasma membrane. Does not use free phosphorylcholine or CDP-choline as donors. Can also transfer phosphoethanolamine head group of phosphatidylethanolamine (PE) on to ceramide (CER) to form ceramide phosphoethanolamine (CPE). Regulates receptor-mediated signal transduction via mitogenic DAG and proapoptotic CER, as well as via SM, a structural component of membrane rafts that serve as platforms for signal transduction and protein sorting. To a lesser extent, plays a role in secretory transport via regulation of DAG pool at the Golgi apparatus and its downstream effects on PRKD1. Required for normal bone matrix mineralization. This is Phosphatidylcholine:ceramide cholinephosphotransferase 2 (Sgms2) from Rattus norvegicus (Rat).